Reading from the N-terminus, the 147-residue chain is Large ribosomal subunit protein uL15 (147 aa).

The interval 1 to 42 is disordered; it reads MTIKLHHLRPAPGAKTDKTRVGRGEGSKGKTAGRGTKGTKAR. The span at 15 to 28 shows a compositional bias: basic and acidic residues; it reads KTDKTRVGRGEGSK.

This sequence belongs to the universal ribosomal protein uL15 family. In terms of assembly, part of the 50S ribosomal subunit.

Binds to the 23S rRNA. The chain is Large ribosomal subunit protein uL15 from Nocardia farcinica (strain IFM 10152).